Consider the following 212-residue polypeptide: uncharacterized protein (212 aa).

The first 20 residues, 1 to 20 (MKNLTIGAIFLIFFAVSAFA), serve as a signal peptide directing secretion.

The protein localises to the virion. This is an uncharacterized protein from Acanthamoeba polyphaga (Amoeba).